The primary structure comprises 523 residues: MKYLQTVASMKSKFDIVAIVEQYIKLVKSGSAYKGLCPFHAEKTPSFFVNPLQGYFYCFGCKKGGDVIGFLMDMEKINYNDALKILCEKSGIHYDDLKISRGSENKNENKDMVSKIYSLNSRLINTIKFFLSKNKKALDYVLKSRAISKEIVDLFELGYLPFNFKNGLELHDFLVSKGYSSEVLRKSGLFSKTNPKVSILFQRLIFPIKDFKGNVVGFGGRDLDGKGSKYINLGETEVFKKRELLYGFYEGFEEIKSTKSVILVEGYIDVLAFFTSGIKRAVSTLGTAFSKEHLALIQRYADEIIFSFDGDDAGLSATLKAYQICLPFNINVSVVRMDFGTDPADVLKSEGVDSLQKILNNRCDAFEYLLDVYSNKYNLNKTVDLNAMINLFLNLINLSKVDTQKKIFLDKLSNKLGIGVTTLLKDYYRIKERFVVDNNKRNLYAHNDDSYERYLIVALLKNFSYFSIVRRNIIDSDLINVDARKVFMCFENLFENNKDFSLMDLKKNLKDTYKVSEFFLKKF.

The segment at 37 to 61 adopts a CHC2-type zinc-finger fold; the sequence is CPFHAEKTPSFFVNPLQGYFYCFGC. Residues 259–340 form the Toprim domain; that stretch reads KSVILVEGYI…NVSVVRMDFG (82 aa). Positions 265, 309, and 311 each coordinate Mg(2+).

This sequence belongs to the DnaG primase family. Monomer. Interacts with DnaB. It depends on Zn(2+) as a cofactor. Requires Mg(2+) as cofactor.

It catalyses the reaction ssDNA + n NTP = ssDNA/pppN(pN)n-1 hybrid + (n-1) diphosphate.. Its function is as follows. RNA polymerase that catalyzes the synthesis of short RNA molecules used as primers for DNA polymerase during DNA replication. The polypeptide is DNA primase (Borreliella burgdorferi (strain ATCC 35210 / DSM 4680 / CIP 102532 / B31) (Borrelia burgdorferi)).